A 506-amino-acid chain; its full sequence is GMP synthase [glutamine-hydrolyzing] (506 aa).

A Glutamine amidotransferase type-1 domain is found at 2–190; it reads SIVILDFGSQ…FLDICGVTRD (189 aa). Cys79 functions as the Nucleophile in the catalytic mechanism. Catalysis depends on residues His165 and Glu167. The GMPS ATP-PPase domain occupies 191-381; that stretch reads WNAEHIVDEL…LGLPDHIRMR (191 aa). 219 to 225 provides a ligand contact to ATP; it reads SGGVDSS.

Homodimer.

The enzyme catalyses XMP + L-glutamine + ATP + H2O = GMP + L-glutamate + AMP + diphosphate + 2 H(+). It functions in the pathway purine metabolism; GMP biosynthesis; GMP from XMP (L-Gln route): step 1/1. Functionally, catalyzes the synthesis of GMP from XMP. This Deinococcus radiodurans (strain ATCC 13939 / DSM 20539 / JCM 16871 / CCUG 27074 / LMG 4051 / NBRC 15346 / NCIMB 9279 / VKM B-1422 / R1) protein is GMP synthase [glutamine-hydrolyzing] (guaA).